The sequence spans 622 residues: tRNA uridine 5-carboxymethylaminomethyl modification enzyme MnmG (622 aa).

10-15 (GGGHAG) serves as a coordination point for FAD. Residue 269-283 (GPRYCPSVEDKIVKF) coordinates NAD(+).

The protein belongs to the MnmG family. As to quaternary structure, homodimer. Heterotetramer of two MnmE and two MnmG subunits. Requires FAD as cofactor.

Its subcellular location is the cytoplasm. NAD-binding protein involved in the addition of a carboxymethylaminomethyl (cmnm) group at the wobble position (U34) of certain tRNAs, forming tRNA-cmnm(5)s(2)U34. The sequence is that of tRNA uridine 5-carboxymethylaminomethyl modification enzyme MnmG from Bartonella quintana (strain Toulouse) (Rochalimaea quintana).